A 316-amino-acid polypeptide reads, in one-letter code: Peroxidase 31 (316 aa).

The first 19 residues, 1–19 (MASLKSLFLLFLFFFTAQS), serve as a signal peptide directing secretion. Disulfide bonds link cysteine 30–cysteine 111, cysteine 63–cysteine 68, cysteine 117–cysteine 312, and cysteine 196–cysteine 222. Histidine 61 functions as the Proton acceptor in the catalytic mechanism. Aspartate 62, glycine 67, aspartate 69, and serine 71 together coordinate Ca(2+). Residue proline 159 coordinates substrate. A heme b-binding site is contributed by histidine 189. Serine 190 is a Ca(2+) binding site. N-linked (GlcNAc...) asparagine glycosylation occurs at asparagine 206. Ca(2+) is bound by residues aspartate 236, threonine 239, and aspartate 244.

It belongs to the peroxidase family. Classical plant (class III) peroxidase subfamily. It depends on heme b as a cofactor. The cofactor is Ca(2+).

It is found in the secreted. The catalysed reaction is 2 a phenolic donor + H2O2 = 2 a phenolic radical donor + 2 H2O. Removal of H(2)O(2), oxidation of toxic reductants, biosynthesis and degradation of lignin, suberization, auxin catabolism, response to environmental stresses such as wounding, pathogen attack and oxidative stress. These functions might be dependent on each isozyme/isoform in each plant tissue. The sequence is that of Peroxidase 31 (PER31) from Arabidopsis thaliana (Mouse-ear cress).